Here is a 327-residue protein sequence, read N- to C-terminus: tRNA dimethylallyltransferase (327 aa).

Residue 14–21 participates in ATP binding; it reads GPTASGKT. 16–21 is a substrate binding site; the sequence is TASGKT. Interaction with substrate tRNA regions lie at residues 39–42 and 163–167; these read DSAL and QRIQR.

This sequence belongs to the IPP transferase family. Monomer. Mg(2+) serves as cofactor.

It catalyses the reaction adenosine(37) in tRNA + dimethylallyl diphosphate = N(6)-dimethylallyladenosine(37) in tRNA + diphosphate. In terms of biological role, catalyzes the transfer of a dimethylallyl group onto the adenine at position 37 in tRNAs that read codons beginning with uridine, leading to the formation of N6-(dimethylallyl)adenosine (i(6)A). This chain is tRNA dimethylallyltransferase, found in Xanthomonas axonopodis pv. citri (strain 306).